Reading from the N-terminus, the 510-residue chain is Chromosomal replication initiator protein DnaA (510 aa).

A domain I, interacts with DnaA modulators region spans residues 1 to 74 (MHTDLWERGC…EATLSELAGK (74 aa)). Residues 74-173 (KPVRLELSLL…PTLSPAVSRG (100 aa)) are domain II. The interval 125–168 (ARHDPQSVVPTPGGSANGRAAPRVGEPGGPVGTSTLPVAPTLSP) is disordered. The segment at 174 to 390 (RLNPALTFDT…GALRKVLAYS (217 aa)) is domain III, AAA+ region. Residues glycine 218, glycine 220, lysine 221, and threonine 222 each contribute to the ATP site. Positions 391 to 510 (RFSHKEISIN…LHVLEQTLKG (120 aa)) are domain IV, binds dsDNA.

Belongs to the DnaA family. Oligomerizes as a right-handed, spiral filament on DNA at oriC.

Its subcellular location is the cytoplasm. Functionally, plays an essential role in the initiation and regulation of chromosomal replication. ATP-DnaA binds to the origin of replication (oriC) to initiate formation of the DNA replication initiation complex once per cell cycle. Binds the DnaA box (a 9 base pair repeat at the origin) and separates the double-stranded (ds)DNA. Forms a right-handed helical filament on oriC DNA; dsDNA binds to the exterior of the filament while single-stranded (ss)DNA is stabiized in the filament's interior. The ATP-DnaA-oriC complex binds and stabilizes one strand of the AT-rich DNA unwinding element (DUE), permitting loading of DNA polymerase. After initiation quickly degrades to an ADP-DnaA complex that is not apt for DNA replication. Binds acidic phospholipids. The polypeptide is Chromosomal replication initiator protein DnaA (Leptothrix cholodnii (strain ATCC 51168 / LMG 8142 / SP-6) (Leptothrix discophora (strain SP-6))).